A 326-amino-acid polypeptide reads, in one-letter code: tRNA uridine(34) hydroxylase (326 aa).

Positions 123-217 (SDPDVLLVDT…YLEEVKQEES (95 aa)) constitute a Rhodanese domain. Cysteine 177 acts as the Cysteine persulfide intermediate in catalysis. Positions 304–326 (VSQVILSRRTEKEDQRQAQNKKA) are disordered.

This sequence belongs to the TrhO family.

It catalyses the reaction uridine(34) in tRNA + AH2 + O2 = 5-hydroxyuridine(34) in tRNA + A + H2O. Catalyzes oxygen-dependent 5-hydroxyuridine (ho5U) modification at position 34 in tRNAs. The polypeptide is tRNA uridine(34) hydroxylase (Shewanella sediminis (strain HAW-EB3)).